The sequence spans 204 residues: Thiamine-phosphate synthase (204 aa).

4-amino-2-methyl-5-(diphosphooxymethyl)pyrimidine is bound by residues 35–39 (QVREK) and asparagine 67. 2 residues coordinate Mg(2+): aspartate 68 and aspartate 87. Residue serine 106 participates in 4-amino-2-methyl-5-(diphosphooxymethyl)pyrimidine binding. 132–134 (TPT) contributes to the 2-[(2R,5Z)-2-carboxy-4-methylthiazol-5(2H)-ylidene]ethyl phosphate binding site. A 4-amino-2-methyl-5-(diphosphooxymethyl)pyrimidine-binding site is contributed by lysine 135. 2-[(2R,5Z)-2-carboxy-4-methylthiazol-5(2H)-ylidene]ethyl phosphate is bound by residues glycine 163 and 183–184 (VS).

Belongs to the thiamine-phosphate synthase family. Mg(2+) serves as cofactor.

The catalysed reaction is 2-[(2R,5Z)-2-carboxy-4-methylthiazol-5(2H)-ylidene]ethyl phosphate + 4-amino-2-methyl-5-(diphosphooxymethyl)pyrimidine + 2 H(+) = thiamine phosphate + CO2 + diphosphate. It carries out the reaction 2-(2-carboxy-4-methylthiazol-5-yl)ethyl phosphate + 4-amino-2-methyl-5-(diphosphooxymethyl)pyrimidine + 2 H(+) = thiamine phosphate + CO2 + diphosphate. It catalyses the reaction 4-methyl-5-(2-phosphooxyethyl)-thiazole + 4-amino-2-methyl-5-(diphosphooxymethyl)pyrimidine + H(+) = thiamine phosphate + diphosphate. It functions in the pathway cofactor biosynthesis; thiamine diphosphate biosynthesis; thiamine phosphate from 4-amino-2-methyl-5-diphosphomethylpyrimidine and 4-methyl-5-(2-phosphoethyl)-thiazole: step 1/1. Its function is as follows. Condenses 4-methyl-5-(beta-hydroxyethyl)thiazole monophosphate (THZ-P) and 2-methyl-4-amino-5-hydroxymethyl pyrimidine pyrophosphate (HMP-PP) to form thiamine monophosphate (TMP). This Vibrio parahaemolyticus serotype O3:K6 (strain RIMD 2210633) protein is Thiamine-phosphate synthase.